Here is a 146-residue protein sequence, read N- to C-terminus: Large ribosomal subunit protein uL15 (146 aa).

The segment covering 1–13 has biased composition (basic and acidic residues); the sequence is MKLHELKPAEGSR. Positions 1–48 are disordered; it reads MKLHELKPAEGSRKVRNRVGRGIGSGNGKTAGKGHKGQNARSGGGVRL. The span at 21–31 shows a compositional bias: gly residues; sequence RGIGSGNGKTA.

It belongs to the universal ribosomal protein uL15 family. Part of the 50S ribosomal subunit.

Binds to the 23S rRNA. In Bacillus cytotoxicus (strain DSM 22905 / CIP 110041 / 391-98 / NVH 391-98), this protein is Large ribosomal subunit protein uL15.